Reading from the N-terminus, the 366-residue chain is UDP-N-acetylglucosamine--N-acetylmuramyl-(pentapeptide) pyrophosphoryl-undecaprenol N-acetylglucosamine transferase (366 aa).

UDP-N-acetyl-alpha-D-glucosamine is bound by residues 10–12 (TGG), N124, R165, S192, I247, and Q292.

This sequence belongs to the glycosyltransferase 28 family. MurG subfamily.

The protein resides in the cell inner membrane. It catalyses the reaction di-trans,octa-cis-undecaprenyl diphospho-N-acetyl-alpha-D-muramoyl-L-alanyl-D-glutamyl-meso-2,6-diaminopimeloyl-D-alanyl-D-alanine + UDP-N-acetyl-alpha-D-glucosamine = di-trans,octa-cis-undecaprenyl diphospho-[N-acetyl-alpha-D-glucosaminyl-(1-&gt;4)]-N-acetyl-alpha-D-muramoyl-L-alanyl-D-glutamyl-meso-2,6-diaminopimeloyl-D-alanyl-D-alanine + UDP + H(+). Its pathway is cell wall biogenesis; peptidoglycan biosynthesis. Cell wall formation. Catalyzes the transfer of a GlcNAc subunit on undecaprenyl-pyrophosphoryl-MurNAc-pentapeptide (lipid intermediate I) to form undecaprenyl-pyrophosphoryl-MurNAc-(pentapeptide)GlcNAc (lipid intermediate II). This is UDP-N-acetylglucosamine--N-acetylmuramyl-(pentapeptide) pyrophosphoryl-undecaprenol N-acetylglucosamine transferase from Geotalea daltonii (strain DSM 22248 / JCM 15807 / FRC-32) (Geobacter daltonii).